The following is a 309-amino-acid chain: DNA-directed RNA polymerase subunit alpha (309 aa).

The segment at 1 to 225 is alpha N-terminal domain (alpha-NTD); it reads MFQVQCLESA…SLFKLVNSAD (225 aa). An alpha C-terminal domain (alpha-CTD) region spans residues 237–309; sequence IVQVSQTDVT…LHERFNLTLN (73 aa).

It belongs to the RNA polymerase alpha chain family. In terms of assembly, in plastids the minimal PEP RNA polymerase catalytic core is composed of four subunits: alpha, beta, beta', and beta''. When a (nuclear-encoded) sigma factor is associated with the core the holoenzyme is formed, which can initiate transcription.

The protein resides in the plastid. Its subcellular location is the chloroplast. It catalyses the reaction RNA(n) + a ribonucleoside 5'-triphosphate = RNA(n+1) + diphosphate. Its function is as follows. DNA-dependent RNA polymerase catalyzes the transcription of DNA into RNA using the four ribonucleoside triphosphates as substrates. The sequence is that of DNA-directed RNA polymerase subunit alpha from Emiliania huxleyi (Coccolithophore).